Consider the following 91-residue polypeptide: Protein sigN139 (91 aa).

N-linked (GlcNAc...) asparagine glycans are attached at residues asparagine 23 and asparagine 34. A helical transmembrane segment spans residues 46–68; that stretch reads LLPVVAFISGTVTSITGLVAGAL.

Its subcellular location is the membrane. The sequence is that of Protein sigN139 from Dictyostelium discoideum (Social amoeba).